Here is a 131-residue protein sequence, read N- to C-terminus: Sperm microtubule inner protein 11 (131 aa).

Positions lysine 18–glycine 44 are disordered. Basic and acidic residues predominate over residues asparagine 21–proline 33.

Microtubule inner protein component of sperm flagellar doublet microtubules.

Its subcellular location is the cytoplasm. It is found in the cytoskeleton. It localises to the flagellum axoneme. Functionally, microtubule inner protein (MIP) part of the dynein-decorated doublet microtubules (DMTs) in flagellum axoneme. May serve to reinforce and thus stabilize the microtubule structure in the sperm flagella. This chain is Sperm microtubule inner protein 11, found in Homo sapiens (Human).